A 480-amino-acid chain; its full sequence is Protein DETOXIFICATION 15 (480 aa).

The next 12 membrane-spanning stretches (helical) occupy residues 36 to 56 (GPLI…VMFV), 69 to 89 (IATS…ASAM), 118 to 138 (LLSV…VFFG), 143 to 163 (IAHL…AYGL), 180 to 200 (VVIC…VLVL), 208 to 228 (GAAV…SCYV), 255 to 275 (LVIP…ELLV), 294 to 314 (VWMI…NELG), 326 to 346 (RVVL…LILI), 360 to 380 (VVSH…LDSF), 396 to 416 (IGAF…GLLL), and 428 to 448 (WLGI…ITFF).

This sequence belongs to the multi antimicrobial extrusion (MATE) (TC 2.A.66.1) family.

Its subcellular location is the membrane. This chain is Protein DETOXIFICATION 15, found in Arabidopsis thaliana (Mouse-ear cress).